The chain runs to 62 residues: DNA-directed RNA polymerase subunit Rpo10 (62 aa).

Residues Cys-6, Cys-9, Cys-43, and Cys-44 each contribute to the Zn(2+) site.

The protein belongs to the archaeal Rpo10/eukaryotic RPB10 RNA polymerase subunit family. Part of the RNA polymerase complex. Zn(2+) is required as a cofactor.

The protein resides in the cytoplasm. The enzyme catalyses RNA(n) + a ribonucleoside 5'-triphosphate = RNA(n+1) + diphosphate. In terms of biological role, DNA-dependent RNA polymerase (RNAP) catalyzes the transcription of DNA into RNA using the four ribonucleoside triphosphates as substrates. The sequence is that of DNA-directed RNA polymerase subunit Rpo10 from Methanoculleus marisnigri (strain ATCC 35101 / DSM 1498 / JR1).